We begin with the raw amino-acid sequence, 343 residues long: Putative ALA-interacting subunit 2 (343 aa).

Residues 43–63 traverse the membrane as a helical segment; sequence PISVITVFMLMGFVFIPIGLI. N-linked (GlcNAc...) asparagine glycosylation is found at Asn103, Asn178, Asn191, and Asn218. The chain crosses the membrane as a helical span at residues 301–321; it reads FLGITYLVVGSSSIVISIIFM.

It belongs to the CDC50/LEM3 family. As to expression, expressed in roots, leaves, stems, flowers and siliques.

It is found in the membrane. The polypeptide is Putative ALA-interacting subunit 2 (ALIS2) (Arabidopsis thaliana (Mouse-ear cress)).